Here is a 1211-residue protein sequence, read N- to C-terminus: Transient receptor potential cation channel subfamily A member 1 homolog (1211 aa).

The Cytoplasmic segment spans residues 1–811; that stretch reads MSKKSLGLDV…LKYKWNRLGR (811 aa). ANK repeat units lie at residues 49-79, 83-112, 116-169, 173-202, 206-235, 239-270, 277-306, 311-340, 344-374, 378-407, 411-440, 473-502, 506-535, 540-569, 573-602, 605-634, and 638-669; these read NLRS…AVNA, DFMT…LPNT, EGDT…EIDP, YQLT…DVDA, NKMT…NVTK, RLNT…AIKA, EKKT…KNSC, REKE…NKNE, VKAV…NIDV, QGLT…NLTI, DERT…KKNK, DQNT…SITQ, DEET…RLLL, MGNS…DKEA, YQKT…QIES, DTKT…TIDR, and EGKT…NLMI. The helical transmembrane segment at 812-832 threads the bilayer; it reads PMYYFALFMYLVFIVSLTQYV. Topologically, residues 833 to 870 are extracellular; that stretch reads RHTKAPYNVWNEESYYDSEYFDENETCPQINTTKPDVV. 2 N-linked (GlcNAc...) asparagine glycosylation sites follow: Asn856 and Asn863. The helical transmembrane segment at 871 to 891 threads the bilayer; that stretch reads WKIIIQTLAVCQILVECFQLF. At 892-894 the chain is on the cytoplasmic side; that stretch reads QRK. The chain crosses the membrane as a helical span at residues 895–915; that stretch reads FAYLVNWENWIDCFIYSTALI. Topologically, residues 916–932 are extracellular; the sequence is TVYDFSECSATSGVRQN. A helical membrane pass occupies residues 933–953; sequence WQWILAALCIFFGWINLLFMI. The Cytoplasmic segment spans residues 954–975; that stretch reads RKMPRFGIFVVMFVDIVKTFFR. The chain crosses the membrane as a helical span at residues 976-996; sequence FFPVFVLFIIAFSSSFYVILQ. Topologically, residues 997-1004 are extracellular; it reads NRPEFSTI. Positions 1005 to 1025 form an intramembrane region, pore-forming; the sequence is FMSPLKTTVMMIGEFEFTGIF. The Extracellular portion of the chain corresponds to 1026–1048; sequence HGDETTHAEKMFGPAHTAVACAL. A helical membrane pass occupies residues 1049–1069; that stretch reads FFFFCIIMTILLMNLLVGLAV. Residues 1070–1193 are Cytoplasmic-facing; sequence DDIKGVQEKA…EKQVRLEAII (124 aa). Residues 1149 to 1191 are a coiled coil; it reads EMYEREAEFTSEMTQKLQNQAAKLKNIQENIDVMYEKQVRLEA.

This sequence belongs to the transient receptor (TC 1.A.4) family. As to quaternary structure, homotetramer. In terms of tissue distribution, expressed in many sensory neurons, including OLQ and IL1 neurons.

The protein resides in the cell membrane. Its function is as follows. Receptor-activated non-selective cation channel involved in the nose-touch response and foraging behavior. Contributes to the neural responses of sensory neurons to touch, particularly after repeated mechanical stimulation. Has no apparent role in thermosensory or chemosensory behaviors. The polypeptide is Transient receptor potential cation channel subfamily A member 1 homolog (trpa-1) (Caenorhabditis elegans).